We begin with the raw amino-acid sequence, 1264 residues long: Autophagy-related protein 11 (1264 aa).

3 disordered regions span residues 528-567 (VSGNFNLEFPSSPASPYPDELSRRSSVSSRRMSANQSSED), 1118-1140 (MNGAHPDRRSIGGTSDAASIDDE), and 1180-1264 (DARG…LQGP). Residues 551–564 (RSSVSSRRMSANQS) are compositionally biased toward low complexity. Residues 566-887 (EDKTLAQRIV…AQARESEKEV (322 aa)) are a coiled coil. 2 stretches are compositionally biased toward polar residues: residues 1190–1201 (TSNGGNVAKTLT) and 1240–1250 (TPLSPSAQEAA). Positions 1254–1264 (EEVRRDQLQGP) are enriched in basic and acidic residues.

It belongs to the ATG11 family. Homodimer.

It is found in the preautophagosomal structure membrane. The protein resides in the vacuole membrane. Functionally, involved in cytoplasm to vacuole transport (Cvt), pexophagy, mitophagy and nucleophagy. Recruits mitochondria for their selective degradation via autophagy (mitophagy) during starvation. Works as scaffold proteins that recruit ATG proteins to the pre-autophagosome (PAS), the site of vesicle/autophagosome formation. Required for the Cvt vesicles completion. This chain is Autophagy-related protein 11 (atg11), found in Aspergillus fumigatus (strain ATCC MYA-4609 / CBS 101355 / FGSC A1100 / Af293) (Neosartorya fumigata).